A 186-amino-acid chain; its full sequence is Adenine phosphoribosyltransferase (186 aa).

It belongs to the purine/pyrimidine phosphoribosyltransferase family. In terms of assembly, homodimer.

It localises to the cytoplasm. It carries out the reaction AMP + diphosphate = 5-phospho-alpha-D-ribose 1-diphosphate + adenine. It functions in the pathway purine metabolism; AMP biosynthesis via salvage pathway; AMP from adenine: step 1/1. Its function is as follows. Catalyzes a salvage reaction resulting in the formation of AMP, that is energically less costly than de novo synthesis. The sequence is that of Adenine phosphoribosyltransferase from Xanthomonas oryzae pv. oryzae (strain PXO99A).